A 358-amino-acid polypeptide reads, in one-letter code: Peptide chain release factor 1 (358 aa).

Glutamine 233 bears the N5-methylglutamine mark.

The protein belongs to the prokaryotic/mitochondrial release factor family. Post-translationally, methylated by PrmC. Methylation increases the termination efficiency of RF1.

It is found in the cytoplasm. Its function is as follows. Peptide chain release factor 1 directs the termination of translation in response to the peptide chain termination codons UAG and UAA. The sequence is that of Peptide chain release factor 1 from Geobacillus kaustophilus (strain HTA426).